The following is a 60-amino-acid chain: Beta-toxin BotIT2 (60 aa).

Residues 1-60 form the LCN-type CS-alpha/beta domain; it reads DGYIKGYKGCKITCVINDDYCDTECKAEGGTYGYCWKWGLACWCEDLPDEKRWKSETNTC. Cystine bridges form between cysteine 10–cysteine 60, cysteine 14–cysteine 35, cysteine 21–cysteine 42, and cysteine 25–cysteine 44.

The protein belongs to the long (4 C-C) scorpion toxin superfamily. Sodium channel inhibitor family. Beta subfamily. In terms of tissue distribution, expressed by the venom gland.

Its subcellular location is the secreted. In terms of biological role, beta toxins bind voltage-independently at site-4 of sodium channels (Nav) and shift the voltage of activation toward more negative potentials thereby affecting sodium channel activation and promoting spontaneous and repetitive firing. This toxin specifically acts by inducing a new current with very slow activation/deactivation kinetics due to the transformation of normal fast channels into slow ones. It possess properties of excitatory and depressant toxins. It is highly active on insects and less active on mammals. The chain is Beta-toxin BotIT2 from Buthus occitanus tunetanus (Common European scorpion).